The primary structure comprises 215 residues: 3-isopropylmalate dehydratase small subunit (215 aa).

It belongs to the LeuD family. LeuD type 1 subfamily. As to quaternary structure, heterodimer of LeuC and LeuD.

The enzyme catalyses (2R,3S)-3-isopropylmalate = (2S)-2-isopropylmalate. Its pathway is amino-acid biosynthesis; L-leucine biosynthesis; L-leucine from 3-methyl-2-oxobutanoate: step 2/4. Catalyzes the isomerization between 2-isopropylmalate and 3-isopropylmalate, via the formation of 2-isopropylmaleate. The sequence is that of 3-isopropylmalate dehydratase small subunit from Cellvibrio japonicus (strain Ueda107) (Pseudomonas fluorescens subsp. cellulosa).